The following is a 342-amino-acid chain: Bifunctional terpene synthase Agr4 (342 aa).

D87, N222, S226, and E230 together coordinate Mg(2+). The DDXXD motif motif lies at 87–91 (DEVSD). (2E,6E)-farnesyl diphosphate contacts are provided by R308 and Y309.

Belongs to the terpene synthase family. It depends on Mg(2+) as a cofactor.

It catalyses the reaction (2E,6E)-farnesyl diphosphate = delta-cadinene + diphosphate. It carries out the reaction (2E,6E)-farnesyl diphosphate = gamma-muurolene + diphosphate. The enzyme catalyses (2E,6E)-farnesyl diphosphate = beta-copaene + diphosphate. The catalysed reaction is (2E)-geranyl diphosphate = beta-myrcene + diphosphate. Terpene cyclase that catalyzes the cyclization of farnesyl diphosphate (FPP) to various sesquiterpenes, including beta-copaene, alpha-cubebene, cadina-1(6),4-diene, gamma-muurolene, delta-cadinene, epizonarene, epicubenol and cubenol. Agr4 is also able to use the monoterpene precursor geranyl diphosphate (GPP) as substrates to synthesize the monoterpene beta-myrcene. Delta-cadinene is the major product of Agr4. In Cyclocybe aegerita (Black poplar mushroom), this protein is Bifunctional terpene synthase Agr4.